The following is a 144-amino-acid chain: D-aminoacyl-tRNA deacylase (144 aa).

The Gly-cisPro motif, important for rejection of L-amino acids signature appears at 136–137 (GP).

It belongs to the DTD family. Homodimer.

The protein localises to the cytoplasm. The enzyme catalyses glycyl-tRNA(Ala) + H2O = tRNA(Ala) + glycine + H(+). It catalyses the reaction a D-aminoacyl-tRNA + H2O = a tRNA + a D-alpha-amino acid + H(+). An aminoacyl-tRNA editing enzyme that deacylates mischarged D-aminoacyl-tRNAs. Also deacylates mischarged glycyl-tRNA(Ala), protecting cells against glycine mischarging by AlaRS. Acts via tRNA-based rather than protein-based catalysis; rejects L-amino acids rather than detecting D-amino acids in the active site. By recycling D-aminoacyl-tRNA to D-amino acids and free tRNA molecules, this enzyme counteracts the toxicity associated with the formation of D-aminoacyl-tRNA entities in vivo and helps enforce protein L-homochirality. This chain is D-aminoacyl-tRNA deacylase, found in Histophilus somni (strain 129Pt) (Haemophilus somnus).